Consider the following 454-residue polypeptide: L-cysteine desulfhydrase (454 aa).

The disordered stretch occupies residues 1-25 (MEAGERRNGDSMSHNHRAPKKPRLA). Residues 14–23 (HNHRAPKKPR) show a composition bias toward basic residues. Lys-257 bears the N6-(pyridoxal phosphate)lysine mark.

The protein belongs to the class-V pyridoxal-phosphate-dependent aminotransferase family. Pyridoxal 5'-phosphate is required as a cofactor. As to expression, highly expressed in stems and cauline leaves, and at lower levels in roots, rosette leaves and flowers.

It catalyses the reaction L-cysteine + H2O = hydrogen sulfide + pyruvate + NH4(+) + H(+). Functionally, catalyzes the production of hydrogen sulfide (H2S) from cysteine. Is mainly responsible for the degradation of cysteine to generate H2S, a regulator of stomatal movement and closure. This is L-cysteine desulfhydrase (LCD) from Arabidopsis thaliana (Mouse-ear cress).